A 356-amino-acid polypeptide reads, in one-letter code: tRNA N6-adenosine threonylcarbamoyltransferase (356 aa).

The Fe cation site is built by histidine 114 and histidine 118. Substrate-binding positions include 136–140 (LVSGG), aspartate 169, glycine 182, and asparagine 280. Aspartate 308 provides a ligand contact to Fe cation. The interval 333 to 356 (ARPRWPLDNSQPALLGSGKKGAKA) is disordered.

It belongs to the KAE1 / TsaD family. Requires Fe(2+) as cofactor.

The protein localises to the cytoplasm. The catalysed reaction is L-threonylcarbamoyladenylate + adenosine(37) in tRNA = N(6)-L-threonylcarbamoyladenosine(37) in tRNA + AMP + H(+). Functionally, required for the formation of a threonylcarbamoyl group on adenosine at position 37 (t(6)A37) in tRNAs that read codons beginning with adenine. Is involved in the transfer of the threonylcarbamoyl moiety of threonylcarbamoyl-AMP (TC-AMP) to the N6 group of A37, together with TsaE and TsaB. TsaD likely plays a direct catalytic role in this reaction. This is tRNA N6-adenosine threonylcarbamoyltransferase from Dinoroseobacter shibae (strain DSM 16493 / NCIMB 14021 / DFL 12).